The sequence spans 591 residues: Aspartate--tRNA(Asp/Asn) ligase (591 aa).

L-aspartate is bound at residue Glu-174. The aspartate stretch occupies residues 198–201; the sequence is QLFK. L-aspartate is bound at residue Arg-220. Residues 220–222 and Gln-229 contribute to the ATP site; that span reads RDE. Residue His-450 coordinates L-aspartate. Residue Glu-483 coordinates ATP. Residue Arg-490 coordinates L-aspartate. 535–538 contacts ATP; it reads GLDR.

Belongs to the class-II aminoacyl-tRNA synthetase family. Type 1 subfamily. As to quaternary structure, homodimer.

Its subcellular location is the cytoplasm. The catalysed reaction is tRNA(Asx) + L-aspartate + ATP = L-aspartyl-tRNA(Asx) + AMP + diphosphate. Aspartyl-tRNA synthetase with relaxed tRNA specificity since it is able to aspartylate not only its cognate tRNA(Asp) but also tRNA(Asn). Reaction proceeds in two steps: L-aspartate is first activated by ATP to form Asp-AMP and then transferred to the acceptor end of tRNA(Asp/Asn). This is Aspartate--tRNA(Asp/Asn) ligase from Pseudomonas putida (strain GB-1).